Reading from the N-terminus, the 401-residue chain is L-threonine ammonia-lyase (401 aa).

The residue at position 51 (Lys-51) is an N6-(pyridoxal phosphate)lysine. Residues Asn-78, 178–181, and Ser-301 contribute to the pyridoxal 5'-phosphate site; that span reads GGGL. The ACT domain maps to 326–401; the sequence is FIETFVMDRP…AKGYEVRIVG (76 aa).

The protein belongs to the serine/threonine dehydratase family. Homotetramer. The cofactor is pyridoxal 5'-phosphate.

It catalyses the reaction L-threonine = 2-oxobutanoate + NH4(+). It carries out the reaction L-serine = pyruvate + NH4(+). Its pathway is amino-acid biosynthesis; L-isoleucine biosynthesis; 2-oxobutanoate from L-threonine: step 1/1. Activity is insensitive to allosteric regulators L-valine and L-isoleucine at low concentrations, while these L-amino acids are inhibitors at high concentrations. Is insensitive to ammonium chloride and AMP. Inhibited in the presence of aminoxyacetic acid (AOAA), an inhibitor of pyridoxal phosphate-dependent enzymes. Functionally, catalyzes the conversion of L-threonine to 2-oxobutanoate and ammonia. Can also use L-serine, but the catalytic efficiency toward L-threonine is about sixfold higher than that toward L-serine. Also shows weak activity toward L-allo-threonine, but cannot use the corresponding D-amino acids. Does not exhibit racemase activity toward various amino acids, including serine. Physiologically, is likely involved in the threonine-dependent pathway of isoleucine biosynthesis. This is L-threonine ammonia-lyase from Thermotoga maritima (strain ATCC 43589 / DSM 3109 / JCM 10099 / NBRC 100826 / MSB8).